Here is a 995-residue protein sequence, read N- to C-terminus: UPF0182 protein MMAR_1371 (995 aa).

Transmembrane regions (helical) follow at residues 18-38, 63-83, 113-133, 175-195, 210-230, 259-279, and 287-307; these read VLIL…RLID, FLVF…GLAL, LFGI…AQSY, FVAI…FGGI, IQLV…YWLD, KLIL…AIVL, and IGLV…PMIV. The tract at residues 900-948 is disordered; it reads AATGIQPTEGGAPANVPPNNAPSPEALPGTPPSPPTAVPPAPEASVTLS. Over residues 928–941 the composition is skewed to pro residues; the sequence is GTPPSPPTAVPPAP.

Belongs to the UPF0182 family.

It is found in the cell membrane. This is UPF0182 protein MMAR_1371 from Mycobacterium marinum (strain ATCC BAA-535 / M).